The sequence spans 235 residues: uncharacterized protein (235 aa).

2 disordered regions span residues 60–96 and 192–235; these read SSNR…QKKT and LNTS…YDSF. Residues 80 to 93 show a composition bias toward polar residues; sequence SFQNMNSSMPSSTQ. Residues 197–214 show a composition bias toward acidic residues; the sequence is SEDDTESIVETDYSEEEK.

Belongs to the asfivirus DP238L family.

This is an uncharacterized protein from Ornithodoros (relapsing fever ticks).